The chain runs to 468 residues: 6-phosphogluconate dehydrogenase, decarboxylating (468 aa).

Residues 9-14 (GLAVMG), 32-34 (NRS), 73-75 (VQA), and N101 contribute to the NADP(+) site. Substrate contacts are provided by residues N101 and 127–129 (SGG). The active-site Proton acceptor is the K182. 185–186 (HN) is a binding site for substrate. E189 acts as the Proton donor in catalysis. Substrate-binding residues include Y190, K259, R286, R444, and H450.

It belongs to the 6-phosphogluconate dehydrogenase family. Homodimer.

It carries out the reaction 6-phospho-D-gluconate + NADP(+) = D-ribulose 5-phosphate + CO2 + NADPH. The protein operates within carbohydrate degradation; pentose phosphate pathway; D-ribulose 5-phosphate from D-glucose 6-phosphate (oxidative stage): step 3/3. Functionally, catalyzes the oxidative decarboxylation of 6-phosphogluconate to ribulose 5-phosphate and CO(2), with concomitant reduction of NADP to NADPH. The sequence is that of 6-phosphogluconate dehydrogenase, decarboxylating (gnd) from Staphylococcus aureus (strain COL).